We begin with the raw amino-acid sequence, 440 residues long: Cytochrome c biogenesis protein Ccs1 (440 aa).

The next 3 membrane-spanning stretches (helical) occupy residues 19 to 39 (LRLA…GTFI), 78 to 98 (NIWF…CTYT), and 164 to 184 (VGPI…ACGA).

The protein belongs to the Ccs1/CcsB family. As to quaternary structure, may interact with CcsA.

The protein resides in the plastid. It localises to the chloroplast thylakoid membrane. Functionally, required during biogenesis of c-type cytochromes (cytochrome c6 and cytochrome f) at the step of heme attachment. The chain is Cytochrome c biogenesis protein Ccs1 from Emiliania huxleyi (Coccolithophore).